The primary structure comprises 579 residues: MKTSLLFYRTSKNANKEASVLSYELLEKAGYLFKTSKGIYSYTPLFQRVILKMTEIIREELNAIGGQEVCLPLLQSAELWQKTGRWEAFLSEKLLYVLKDRENKEMCLAPTHEEVVSEFVSQWLTGRKQLPVHLYQIGTKFRDEIRPRFGLMRAKEFLMEDSYTFSDSPEQMEEQYAKLRLAYQRIFDRLNLKYVIVTADGGKIGKGKSEEFHVLCSLGEDTICVSGSYGANIEAAQAIPPSYTYSSELLPMKEVATPNVRTIEDLETFFNTPRQQIIKTLVVKVHKKGSEQFFAICIRGDRQVNLTKVSSFLQADDCELASDEEIIKHLHVEKGFIGPLHCPVPCYADETTRPMTNFICANNQKDIHCRYVNWERDIPLPIFGDFLLAESGDLCPQNNEAPYEIFQGVEVAHIFNLGTRYTECFSVGFQDENGEKQLCWMGTYGIGVGRTLAACIEQLADSKGIVWPLAVAPFSITILYNGGDTEGEAVASQFYQSLNTAGFEPLLDDRNERLGFKLKDSDLLGIPYKLIIGKSFQKTGMLEIESRSGEKYNISPENLLDWCSKNLPCHTRKIPPIRE.

Belongs to the class-II aminoacyl-tRNA synthetase family. ProS type 1 subfamily. As to quaternary structure, homodimer.

The protein localises to the cytoplasm. The catalysed reaction is tRNA(Pro) + L-proline + ATP = L-prolyl-tRNA(Pro) + AMP + diphosphate. Functionally, catalyzes the attachment of proline to tRNA(Pro) in a two-step reaction: proline is first activated by ATP to form Pro-AMP and then transferred to the acceptor end of tRNA(Pro). As ProRS can inadvertently accommodate and process non-cognate amino acids such as alanine and cysteine, to avoid such errors it has two additional distinct editing activities against alanine. One activity is designated as 'pretransfer' editing and involves the tRNA(Pro)-independent hydrolysis of activated Ala-AMP. The other activity is designated 'posttransfer' editing and involves deacylation of mischarged Ala-tRNA(Pro). The misacylated Cys-tRNA(Pro) is not edited by ProRS. The sequence is that of Proline--tRNA ligase from Chlamydia muridarum (strain MoPn / Nigg).